Here is a 692-residue protein sequence, read N- to C-terminus: MEKYERIRVVGRGAFGIVHLCLRKADQKLVIIKQIPVEQMTKEERQAAQNECQVLKLLNHPNVIEYYENFLEDKALMIAMEYAPGGTLAEFIQKRCNSLLEEETILHFFVQILLALHHVHTHLILHRDLKTQNILLDKHRMVVKIGDFGISKILSSKSKAYTVVGTPCYISPELCEGKPYNQKSDIWALGCVLYELASLKRAFEAANLPALVLKIMSGTFAPISDRYSPELRQLVLSLLSLEPAQRPPLSHIMAQPLCIRALLNLHTDVGSVRMRRAEKSVAPSNTGSRTTSVRCRGIPRGPVRPAIPPPLSSVYAWGGGLGTPLRLPMLNTEVVQVAAGRTQKAGVTRSGRLILWEAPPLGAGGGSLLPGAVEQPQPQFISRFLEGQSGVTIKHVACGDFFTACLTDRGIIMTFGSGSNGCLGHGSLTDISQPTIVEALLGYEMVQVACGASHVLALSTERELFAWGRGDSGRLGLGTRESHSCPQQVPMPPGQEAQRVVCGIDSSMILTVPGQALACGSNRFNKLGLDHLSLGEEPVPHQQVEEALSFTLLGSAPLDQEPLLSIDLGTAHSAAVTASGDCYTFGSNQHGQLGTNTRRGSRAPCKVQGLEGIKMAMVACGDAFTVAIGAESEVYSWGKGARGRLGRRDEDAGLPRPVQLDETHPYTVTSVSCCHGNTLLAVRSVTDEPVPP.

The Protein kinase domain maps to 4 to 258 (YERIRVVGRG…LSHIMAQPLC (255 aa)). ATP-binding positions include 10–18 (VGRGAFGIV) and Lys33. Asp128 (proton acceptor) is an active-site residue. Thr162 is modified (phosphothreonine; by autocatalysis). The disordered stretch occupies residues 277 to 301 (AEKSVAPSNTGSRTTSVRCRGIPRG). Over residues 282-293 (APSNTGSRTTSV) the composition is skewed to polar residues. RCC1 repeat units follow at residues 312-350 (SSVY…VTRS), 410-461 (GIIM…LSTE), 462-513 (RELF…LTVP), 580-631 (GDCY…IGAE), and 632-684 (SEVY…AVRS).

This sequence belongs to the protein kinase superfamily. NEK Ser/Thr protein kinase family. NIMA subfamily. In terms of assembly, interacts with PKD2; may regulate PKD2 targeting to the cilium. Interacts with ANKS6. Component of a complex containing at least ANKS6, INVS, NEK8 and NPHP3. ANKS6 may organize complex assembly by linking INVS and NPHP3 to NEK8 and INVS may target the complex to the proximal ciliary axoneme. Interacts with ANKS3. Mg(2+) is required as a cofactor. In terms of tissue distribution, highest expression in thyroid, adrenal gland and skin. Low levels in spleen, colon and uterus. Overexpressed in breast tumors, with highest expression in infiltrating ductal carcinomas and moderate levels in mucinous adenocarcinoma.

The protein localises to the cytoplasm. Its subcellular location is the cytoskeleton. The protein resides in the cell projection. It localises to the cilium. It is found in the microtubule organizing center. The protein localises to the centrosome. Its subcellular location is the cilium axoneme. It carries out the reaction L-seryl-[protein] + ATP = O-phospho-L-seryl-[protein] + ADP + H(+). It catalyses the reaction L-threonyl-[protein] + ATP = O-phospho-L-threonyl-[protein] + ADP + H(+). Its function is as follows. Required for renal tubular integrity. May regulate local cytoskeletal structure in kidney tubule epithelial cells. May regulate ciliary biogenesis through targeting of proteins to the cilia. Plays a role in organogenesis, and is involved in the regulation of the Hippo signaling pathway. The polypeptide is Serine/threonine-protein kinase Nek8 (NEK8) (Homo sapiens (Human)).